Reading from the N-terminus, the 520-residue chain is Succinyl-CoA:3-ketoacid coenzyme A transferase 2A, mitochondrial (520 aa).

A mitochondrion-targeting transit peptide spans M1–S39. Residues E280–S299 form a disordered region. Catalysis depends on E342, which acts as the 5-glutamyl coenzyme A thioester intermediate.

The protein belongs to the 3-oxoacid CoA-transferase family. In terms of assembly, homodimer.

The protein resides in the mitochondrion. The enzyme catalyses a 3-oxo acid + succinyl-CoA = a 3-oxoacyl-CoA + succinate. It functions in the pathway ketone metabolism; succinyl-CoA degradation; acetoacetyl-CoA from succinyl-CoA: step 1/1. Functionally, key enzyme for ketone body catabolism. Transfers the CoA moiety from succinate to acetoacetate. Formation of the enzyme-CoA intermediate proceeds via an unstable anhydride species formed between the carboxylate groups of the enzyme and substrate. Probably play and important roles in the energy metabolism of spermatozoa. This is Succinyl-CoA:3-ketoacid coenzyme A transferase 2A, mitochondrial (Oxct2a) from Mus musculus (Mouse).